Reading from the N-terminus, the 124-residue chain is Small ribosomal subunit protein uS11 (124 aa).

This sequence belongs to the universal ribosomal protein uS11 family. In terms of assembly, part of the 30S ribosomal subunit. Interacts with proteins S7 and S18. Binds to IF-3.

Its function is as follows. Located on the platform of the 30S subunit, it bridges several disparate RNA helices of the 16S rRNA. Forms part of the Shine-Dalgarno cleft in the 70S ribosome. This is Small ribosomal subunit protein uS11 from Anaplasma marginale (strain St. Maries).